Reading from the N-terminus, the 501-residue chain is Protein anon-37Cs (501 aa).

The protein localises to the cytoplasm. Has a non-vital function. In Drosophila simulans (Fruit fly), this protein is Protein anon-37Cs (anon-37Cs).